We begin with the raw amino-acid sequence, 374 residues long: Alginate lyase (374 aa).

Positions 1 to 26 are cleaved as a signal peptide; it reads MRNPKLKNLLAPTLLSLAMFAGATQA. Substrate contacts are provided by residues 67–68, 140–141, and tyrosine 258; these read SK and HT.

Belongs to the polysaccharide lyase 5 family.

The protein localises to the periplasm. The catalysed reaction is Eliminative cleavage of alginate to give oligosaccharides with 4-deoxy-alpha-L-erythro-hex-4-enuronosyl groups at their non-reducing ends and beta-D-mannuronate at their reducing end.. Catalyzes the depolymerization of alginate by cleaving the beta-1,4 glycosidic bond between two adjacent sugar residues via a beta-elimination mechanism. May serve to degrade mislocalized alginate that is trapped in the periplasmic space. This Cobetia marina (Deleya marina) protein is Alginate lyase.